Reading from the N-terminus, the 487-residue chain is 2-aminomuconic semialdehyde dehydrogenase (487 aa).

Position 231–236 (231–236) interacts with NAD(+); sequence GSQPTA. Residue glutamate 253 is the Proton acceptor of the active site. The Nucleophile role is filled by cysteine 287. A Phosphoserine modification is found at serine 362.

It belongs to the aldehyde dehydrogenase family. As to expression, detected in hepatocytes and in proximal and distal convoluted tubules in kidney cortex (at protein level). Highly expressed in adult liver and in kidney cortex. First detected in embryonic liver after 15 days of development.

The protein localises to the cytoplasm. The enzyme catalyses 2-aminomuconate 6-semialdehyde + NAD(+) + H2O = (2Z,4E)-2-aminomuconate + NADH + 2 H(+). It participates in amino-acid degradation; L-kynurenine degradation. Catalyzes the NAD-dependent oxidation of 2-aminomuconic semialdehyde of the kynurenine metabolic pathway in L-tryptophan degradation. This chain is 2-aminomuconic semialdehyde dehydrogenase (Aldh8a1), found in Mus musculus (Mouse).